The sequence spans 600 residues: Alpha-N-acetylgalactosaminide alpha-2,6-sialyltransferase 1 (600 aa).

Over 1–14 (MRSCLWRCRHLSQG) the chain is Cytoplasmic. The chain crosses the membrane as a helical; Signal-anchor for type II membrane protein span at residues 15–35 (VQWSLLLAVLVFFLFALPSFI). Residues 36 to 600 (KEPQTKPSRH…PGPGTAKAKN (565 aa)) lie on the Lumenal side of the membrane. 2 disordered regions span residues 38 to 191 (PQTK…AATT) and 208 to 248 (GAVS…TQRN). Basic and acidic residues predominate over residues 46 to 55 (QRTENIKERS). 3 stretches are compositionally biased toward polar residues: residues 84 to 94 (NALNTQTQPKA), 151 to 179 (TEAQSWKSQDTKTTQGNGGQTRKLTASRT), and 209 to 219 (AVSTRTRQKGV). 2 cysteine pairs are disulfide-bonded: cysteine 279-cysteine 362 and cysteine 365-cysteine 533. Asparagine 300, asparagine 311, asparagine 331, asparagine 375, and asparagine 460 each carry an N-linked (GlcNAc...) asparagine glycan.

It belongs to the glycosyltransferase 29 family. Post-translationally, glycosylated; autosialylated. Expression is restricted to the gastrointestinal tract. Highly expressed in goblet cells. Also expressed in various tumor cells.

The protein resides in the golgi apparatus membrane. It carries out the reaction a beta-D-galactosyl-(1-&gt;3)-N-acetyl-alpha-D-galactosaminyl derivative + CMP-N-acetyl-beta-neuraminate = a beta-D-galactosyl-(1-&gt;3)-[N-acetyl-alpha-neuraminyl-(2-&gt;6)]-N-acetyl-alpha-D-galactosaminyl derivative + CMP + H(+). The catalysed reaction is a 3-O-[N-acetyl-alpha-D-galactosaminyl]-L-seryl-[protein] + CMP-N-acetyl-beta-neuraminate = a 3-O-[N-acetyl-alpha-neuraminosyl-(2-&gt;6)-N-acetyl-alpha-D-galactosaminyl]-L-seryl-[protein] + CMP + H(+). It catalyses the reaction a 3-O-[N-acetyl-alpha-D-galactosaminyl]-L-threonyl-[protein] + CMP-N-acetyl-beta-neuraminate = a 3-O-[N-acetyl-alpha-neuraminosyl-(2-&gt;6)-N-acetyl-alpha-D-galactosaminyl]-L-threonyl-[protein] + CMP + H(+). The enzyme catalyses a 3-O-[beta-D-galactosyl-(1-&gt;3)-N-acetyl-alpha-D-galactosaminyl]-L-seryl-[protein] + CMP-N-acetyl-beta-neuraminate = a 3-O-{beta-D-galactosyl-(1-&gt;3)-[N-acetyl-alpha-neuraminosyl-(2-&gt;6)]-N-acetyl-alpha-D-galactosaminyl}-L-seryl-[protein] + CMP + H(+). It carries out the reaction a 3-O-[beta-D-galactosyl-(1-&gt;3)-N-acetyl-alpha-D-galactosaminyl]-L-threonyl-[protein] + CMP-N-acetyl-beta-neuraminate = a 3-O-{beta-D-galactosyl-(1-&gt;3)-[N-acetyl-alpha-neuraminosyl-(2-&gt;6)]-N-acetyl-alpha-D-galactosaminyl}-L-threonyl-[protein] + CMP + H(+). The catalysed reaction is a 3-O-[N-acetyl-alpha-neuraminyl-(2-&gt;3)-beta-D-galactosyl-(1-&gt;3)-N-acetyl-alpha-D-galactosaminyl]-L-threonyl-[protein] + CMP-N-acetyl-beta-neuraminate = a 3-O-{alpha-Neu5Ac-(2-&gt;3)-beta-D-Gal-(1-&gt;3)-[alpha-Neu5Ac-(2-&gt;6)]-alpha-D-GalNAc}-L-threonyl-[protein] + CMP + H(+). It functions in the pathway protein modification; protein glycosylation. Functionally, protein sialyltransferase specifically expressed in goblet cells that plays a key role in intestinal host-commensal homeostasis. Conjugates sialic acid with an alpha-2-6 linkage to N-acetylgalactosamine (GalNAc) glycan chains linked to serine or threonine in glycoproteins. Catalyzes the formation of the sialyl-Tn (S-Tn) antigen, an antigen found in intestinal goblet cells, as well as ulcerative colitis (UC) and various cancers. Protein sialylation in globlet cells is essential for mucus integrity and is required to protect the intestinal mucus against excessive bacterial proteolytic degradation. The chain is Alpha-N-acetylgalactosaminide alpha-2,6-sialyltransferase 1 from Homo sapiens (Human).